Consider the following 454-residue polypeptide: Protein phosphatase methylesterase 1 (454 aa).

Disordered regions lie at residues 1–69 and 181–203; these read MSEL…TGTV and TTVT…APPP. Positions 44-69 are enriched in low complexity; that stretch reads AGPSPGGFPFDDDSSSASSVSSTGTV. Catalysis depends on residues serine 240, aspartate 266, and histidine 412.

The protein belongs to the AB hydrolase superfamily.

The catalysed reaction is [phosphatase 2A protein]-C-terminal L-leucine methyl ester + H2O = [phosphatase 2A protein]-C-terminal L-leucine + methanol + H(+). Demethylates proteins that have been reversibly carboxymethylated. Demethylates the phosphatase PP2A catalytic subunit. The protein is Protein phosphatase methylesterase 1 (pme-1) of Neurospora crassa (strain ATCC 24698 / 74-OR23-1A / CBS 708.71 / DSM 1257 / FGSC 987).